Reading from the N-terminus, the 285-residue chain is MSLQQKIKAYLKLGKLGVVSLLDLAAVAGAFLAYKHGISLLPIIPMFIGGTLASMGAMIINSGIEIDRDKVMSRTSKRPTVVGYVNRKEAIIVGSLLAILGTALGFIDNILTAFFIALGVVIYIFVYTILLKPRTWLNIVIGGFAGSAAAWAGYTSLTNSLTLEGFLLGFLIFMWTPGHFWSLALKYREDYVNAHYPMLPAVVGITTSARAIAISNALMIPIVLLLGYYINLIALIAFSILSLFLMFLSYRLILNPTKEEAIKSFIFSNIYLMLILLIMIIVKLI.

Helical transmembrane passes span 13-33 (LGKL…AFLA), 40-60 (LLPI…AMII), 89-109 (EAII…FIDN), 110-130 (ILTA…YTIL), 137-157 (LNIV…YTSL), 165-185 (GFLL…SLAL), 194-214 (AHYP…AIAI), 230-252 (INLI…SYRL), and 265-285 (FIFS…VKLI).

This sequence belongs to the UbiA prenyltransferase family. Protoheme IX farnesyltransferase subfamily.

The protein localises to the cell membrane. It catalyses the reaction heme b + (2E,6E)-farnesyl diphosphate + H2O = Fe(II)-heme o + diphosphate. It functions in the pathway porphyrin-containing compound metabolism; heme O biosynthesis; heme O from protoheme: step 1/1. Converts heme B (protoheme IX) to heme O by substitution of the vinyl group on carbon 2 of heme B porphyrin ring with a hydroxyethyl farnesyl side group. The polypeptide is Protoheme IX farnesyltransferase (Saccharolobus islandicus (strain Y.N.15.51 / Yellowstone #2) (Sulfolobus islandicus)).